The sequence spans 557 residues: Urocanate hydratase (557 aa).

The disordered stretch occupies residues 1-20 (MSNPRHNEREVRSPRGDELN). NAD(+) is bound by residues 52–53 (GG), Q130, 176–178 (GMG), E196, R201, 242–243 (NA), 263–267 (QTSAH), 273–274 (YL), and Y322. C410 is a catalytic residue. G492 lines the NAD(+) pocket.

It belongs to the urocanase family. The cofactor is NAD(+).

The protein localises to the cytoplasm. The catalysed reaction is 4-imidazolone-5-propanoate = trans-urocanate + H2O. Its pathway is amino-acid degradation; L-histidine degradation into L-glutamate; N-formimidoyl-L-glutamate from L-histidine: step 2/3. In terms of biological role, catalyzes the conversion of urocanate to 4-imidazolone-5-propionate. The sequence is that of Urocanate hydratase from Brucella ovis (strain ATCC 25840 / 63/290 / NCTC 10512).